A 673-amino-acid polypeptide reads, in one-letter code: DNA ligase (673 aa).

Residues 35 to 39 (DADYD), 84 to 85 (SL), and Glu-115 contribute to the NAD(+) site. Residue Lys-117 is the N6-AMP-lysine intermediate of the active site. The NAD(+) site is built by Arg-138, Glu-180, Lys-296, and Lys-320. Residues Cys-415, Cys-418, Cys-433, and Cys-438 each coordinate Zn(2+). The BRCT domain maps to 595-673 (ERGTALAGQT…EDALKKLLGK (79 aa)).

This sequence belongs to the NAD-dependent DNA ligase family. LigA subfamily. It depends on Mg(2+) as a cofactor. Requires Mn(2+) as cofactor.

It catalyses the reaction NAD(+) + (deoxyribonucleotide)n-3'-hydroxyl + 5'-phospho-(deoxyribonucleotide)m = (deoxyribonucleotide)n+m + AMP + beta-nicotinamide D-nucleotide.. Functionally, DNA ligase that catalyzes the formation of phosphodiester linkages between 5'-phosphoryl and 3'-hydroxyl groups in double-stranded DNA using NAD as a coenzyme and as the energy source for the reaction. It is essential for DNA replication and repair of damaged DNA. This is DNA ligase from Koribacter versatilis (strain Ellin345).